The sequence spans 395 residues: Hdr-like menaquinol oxidoreductase integral membrane subunit (395 aa).

10 consecutive transmembrane segments (helical) span residues 15–35, 57–77, 88–108, 126–146, 158–178, 196–216, 231–251, 274–294, 305–325, and 364–384; these read YFALVIILAAVTALGFYAYVL, IPYFIGLSAGSLIVSALAGVF, IAAYMAAAWIIAAILSIALDI, IFSWNAFLYSSYFVICSIYLL, FMAGLAVFWAVLVHSGTGAIY, FIVCAITSGLGLLLANLYFTF, LALIFAGLMMVLGYFLAVEGL, VFWSFWLLVIFGIAIPIIIVL, ITFAGILHAALVFAERFYLII, and IGLIAMVYLIFVVGVKLFALI.

The protein belongs to the NrfD family. Consists of five subunits: an integral membrane subunit, a cytochrome b-like subunit, a cytochrome c subunit and two iron-sulfur subunits.

The protein localises to the cell membrane. Has menaquinol-oxidizing activity. HmeB subunit may function as a menaquinol-oxidizing site. HmeA, HmeB and HmeE subunits may together catalyze electron transfer from menaquinol to cytochrome c. In Archaeoglobus fulgidus (strain ATCC 49558 / DSM 4304 / JCM 9628 / NBRC 100126 / VC-16), this protein is Hdr-like menaquinol oxidoreductase integral membrane subunit (hmeB).